The primary structure comprises 234 residues: Structural PPIase-like protein L605 (234 aa).

The PPIase cyclophilin-type domain maps to 18 to 205 (YMDIVLNNEI…PTFSIGKCGA (188 aa)).

Belongs to the cyclophilin-type PPIase family. Homotrimer.

Its subcellular location is the virion. The protein resides in the host cytoplasm. This Acanthamoeba polyphaga mimivirus (APMV) protein is Structural PPIase-like protein L605.